Here is a 291-residue protein sequence, read N- to C-terminus: Formamidopyrimidine-DNA glycosylase (291 aa).

The Schiff-base intermediate with DNA role is filled by Pro2. Glu3 functions as the Proton donor in the catalytic mechanism. Lys60 functions as the Proton donor; for beta-elimination activity in the catalytic mechanism. Positions 97, 116, and 161 each coordinate DNA. The segment at 246 to 280 adopts an FPG-type zinc-finger fold; sequence WVYNRAGEPCRVCGMPIQRIRLAGRSSHFCSECQT. Arg270 serves as the catalytic Proton donor; for delta-elimination activity.

The protein belongs to the FPG family. Monomer. Zn(2+) is required as a cofactor.

It carries out the reaction Hydrolysis of DNA containing ring-opened 7-methylguanine residues, releasing 2,6-diamino-4-hydroxy-5-(N-methyl)formamidopyrimidine.. The enzyme catalyses 2'-deoxyribonucleotide-(2'-deoxyribose 5'-phosphate)-2'-deoxyribonucleotide-DNA = a 3'-end 2'-deoxyribonucleotide-(2,3-dehydro-2,3-deoxyribose 5'-phosphate)-DNA + a 5'-end 5'-phospho-2'-deoxyribonucleoside-DNA + H(+). Functionally, involved in base excision repair of DNA damaged by oxidation or by mutagenic agents. Acts as a DNA glycosylase that recognizes and removes damaged bases. Has a preference for oxidized purines, such as 7,8-dihydro-8-oxoguanine (8-oxoG). Has AP (apurinic/apyrimidinic) lyase activity and introduces nicks in the DNA strand. Cleaves the DNA backbone by beta-delta elimination to generate a single-strand break at the site of the removed base with both 3'- and 5'-phosphates. This chain is Formamidopyrimidine-DNA glycosylase, found in Nostoc punctiforme (strain ATCC 29133 / PCC 73102).